Reading from the N-terminus, the 373-residue chain is Probable leucine aminopeptidase 1 (373 aa).

An N-terminal signal peptide occupies residues 1 to 18 (MKLLSVLALSATATSVLG). Residues H176 and D195 each coordinate Zn(2+). An N-linked (GlcNAc...) asparagine glycan is attached at N196. The Zn(2+) site is built by E234 and D261. N288 carries N-linked (GlcNAc...) asparagine glycosylation. A disulfide bridge connects residues C310 and C314. Residue H343 coordinates Zn(2+).

It belongs to the peptidase M28 family. M28E subfamily. Monomer. The cofactor is Zn(2+).

It localises to the secreted. Extracellular aminopeptidase which contributes to pathogenicity. The protein is Probable leucine aminopeptidase 1 (LAP1) of Trichophyton verrucosum (strain HKI 0517).